The sequence spans 580 residues: Adenine deaminase (580 aa).

Belongs to the metallo-dependent hydrolases superfamily. Adenine deaminase family. It depends on Mn(2+) as a cofactor.

The catalysed reaction is adenine + H2O + H(+) = hypoxanthine + NH4(+). The chain is Adenine deaminase from Listeria monocytogenes serovar 1/2a (strain ATCC BAA-679 / EGD-e).